A 193-amino-acid polypeptide reads, in one-letter code: CASP-like protein 1E1 (193 aa).

The Cytoplasmic portion of the chain corresponds to 1 to 30 (MESQNKASLPVMDGLERRVVASQSEGASTC). The helical transmembrane segment at 31–51 (DLLLRVLALVLTLAAAIVLGV) threads the bilayer. The Extracellular portion of the chain corresponds to 52 to 86 (DKQTKVVPIKIVDTLPAINLPVSAKWHYLSAFTYS). The helical transmembrane segment at 87 to 107 (VASNAIACSYAALSLVLAVSG) threads the bilayer. Residues 108-113 (KKGIMS) are Cytoplasmic-facing. Residues 114–134 (IVIVLDLLMVAMLFSSNGAAL) form a helical membrane-spanning segment. Residues 135 to 162 (AIGLMGYQGNSHVRWTKVCHVFGRFCNQ) lie on the Extracellular side of the membrane. Residues 163–183 (VAVSISLSLLGSILFLLLVGI) traverse the membrane as a helical segment. The Cytoplasmic segment spans residues 184–193 (TSLRLHKKSK).

It belongs to the Casparian strip membrane proteins (CASP) family. In terms of assembly, homodimer and heterodimers.

Its subcellular location is the cell membrane. In Populus trichocarpa (Western balsam poplar), this protein is CASP-like protein 1E1.